We begin with the raw amino-acid sequence, 291 residues long: NAD kinase (291 aa).

The active-site Proton acceptor is Asp-72. Residues 72-73 (DG), 146-147 (ND), Arg-157, Arg-174, Asp-176, 187-192 (TAYSLS), and Gln-247 contribute to the NAD(+) site.

This sequence belongs to the NAD kinase family. A divalent metal cation is required as a cofactor.

It localises to the cytoplasm. It catalyses the reaction NAD(+) + ATP = ADP + NADP(+) + H(+). In terms of biological role, involved in the regulation of the intracellular balance of NAD and NADP, and is a key enzyme in the biosynthesis of NADP. Catalyzes specifically the phosphorylation on 2'-hydroxyl of the adenosine moiety of NAD to yield NADP. The polypeptide is NAD kinase (Hydrogenovibrio crunogenus (strain DSM 25203 / XCL-2) (Thiomicrospira crunogena)).